The sequence spans 246 residues: Probable transcriptional regulatory protein Dole_0371 (246 aa).

This sequence belongs to the TACO1 family.

The protein localises to the cytoplasm. The chain is Probable transcriptional regulatory protein Dole_0371 from Desulfosudis oleivorans (strain DSM 6200 / JCM 39069 / Hxd3) (Desulfococcus oleovorans).